An 896-amino-acid chain; its full sequence is Translation initiation factor IF-2 (896 aa).

The segment at 46-315 (LAHLNRQHGG…FNKPAQPVER (270 aa)) is disordered. A compositionally biased stretch (basic and acidic residues) spans 99–247 (SASEEQEREE…RKQQEKEDVH (149 aa)). A compositionally biased stretch (basic residues) spans 269–278 (SRKRGKKRRR). Basic and acidic residues predominate over residues 279–288 (KDEESDDTPR). The tr-type G domain occupies 396-565 (PRAPVVTVMG…LLQSEVLDLR (170 aa)). The tract at residues 405–412 (GHVDHGKT) is G1. GTP is bound at residue 405 to 412 (GHVDHGKT). Positions 430-434 (GITQH) are G2. Positions 451 to 454 (DTPG) are G3. Residues 451-455 (DTPGH) and 505-508 (NKMD) each bind GTP. The tract at residues 505-508 (NKMD) is G4. The segment at 541-543 (SAH) is G5.

Belongs to the TRAFAC class translation factor GTPase superfamily. Classic translation factor GTPase family. IF-2 subfamily.

The protein localises to the cytoplasm. One of the essential components for the initiation of protein synthesis. Protects formylmethionyl-tRNA from spontaneous hydrolysis and promotes its binding to the 30S ribosomal subunits. Also involved in the hydrolysis of GTP during the formation of the 70S ribosomal complex. The polypeptide is Translation initiation factor IF-2 (Idiomarina loihiensis (strain ATCC BAA-735 / DSM 15497 / L2-TR)).